The sequence spans 479 residues: Sucrose-6-phosphate hydrolase (479 aa).

Residues 1-28 (MTAHDQELRRRAYEEVEKKEPIANSDPH) are disordered. Substrate is bound by residues 40-43 (LLND), Q59, 102-103 (YS), 161-162 (RD), and E220. D43 is an active-site residue.

It belongs to the glycosyl hydrolase 32 family.

It catalyses the reaction Hydrolysis of terminal non-reducing beta-D-fructofuranoside residues in beta-D-fructofuranosides.. Its pathway is glycan biosynthesis; sucrose metabolism. The protein is Sucrose-6-phosphate hydrolase (sacA) of Bacillus subtilis (strain 168).